A 160-amino-acid polypeptide reads, in one-letter code: SsrA-binding protein (160 aa).

Belongs to the SmpB family.

It localises to the cytoplasm. Its function is as follows. Required for rescue of stalled ribosomes mediated by trans-translation. Binds to transfer-messenger RNA (tmRNA), required for stable association of tmRNA with ribosomes. tmRNA and SmpB together mimic tRNA shape, replacing the anticodon stem-loop with SmpB. tmRNA is encoded by the ssrA gene; the 2 termini fold to resemble tRNA(Ala) and it encodes a 'tag peptide', a short internal open reading frame. During trans-translation Ala-aminoacylated tmRNA acts like a tRNA, entering the A-site of stalled ribosomes, displacing the stalled mRNA. The ribosome then switches to translate the ORF on the tmRNA; the nascent peptide is terminated with the 'tag peptide' encoded by the tmRNA and targeted for degradation. The ribosome is freed to recommence translation, which seems to be the essential function of trans-translation. This chain is SsrA-binding protein, found in Chloroflexus aurantiacus (strain ATCC 29364 / DSM 637 / Y-400-fl).